A 143-amino-acid chain; its full sequence is KQRTVPRCFCCGSLQFPHHRPGLRRHRKNTTRSHAAVDRPRRTRRGDASPRPTGCGGERRAPAIPGGATSPHMSRRSGRGPVGDGREASRTAAEEKRRRKENYRQGPGFLLEKQHVGQDPDANGNHDDDDHAGQDAAHQCRIQ.

The interval 13–143 (SLQFPHHRPG…QDAAHQCRIQ (131 aa)) is disordered. The span at 17-31 (PHHRPGLRRHRKNTT) shows a compositional bias: basic residues. Basic and acidic residues-rich tracts occupy residues 35–48 (AAVD…RGDA), 84–96 (DGRE…AEEK), and 112–133 (EKQH…DHAG). The span at 134 to 143 (QDAAHQCRIQ) shows a compositional bias: low complexity.

This is an uncharacterized protein from Homo sapiens (Human).